A 48-amino-acid chain; its full sequence is Large ribosomal subunit protein eL40 (48 aa).

The protein belongs to the eukaryotic ribosomal protein eL40 family.

The polypeptide is Large ribosomal subunit protein eL40 (Methanosphaera stadtmanae (strain ATCC 43021 / DSM 3091 / JCM 11832 / MCB-3)).